The primary structure comprises 391 residues: Carbamoyl phosphate synthase small chain (391 aa).

The segment at 1-187 is CPSase; that stretch reads MAGVKERAVL…PLPYAWPTLK (187 aa). The L-glutamine site is built by S50, G239, and G241. Residues 191–376 enclose the Glutamine amidotransferase type-1 domain; that stretch reads RIVVMDFGIK…LEEVEAFHGA (186 aa). C266 serves as the catalytic Nucleophile. L-glutamine-binding residues include L267, Q270, N308, G310, and Y311. Active-site residues include H349 and E351.

The protein belongs to the CarA family. In terms of assembly, composed of two chains; the small (or glutamine) chain promotes the hydrolysis of glutamine to ammonia, which is used by the large (or ammonia) chain to synthesize carbamoyl phosphate. Tetramer of heterodimers (alpha,beta)4.

The enzyme catalyses hydrogencarbonate + L-glutamine + 2 ATP + H2O = carbamoyl phosphate + L-glutamate + 2 ADP + phosphate + 2 H(+). It catalyses the reaction L-glutamine + H2O = L-glutamate + NH4(+). Its pathway is amino-acid biosynthesis; L-arginine biosynthesis; carbamoyl phosphate from bicarbonate: step 1/1. It functions in the pathway pyrimidine metabolism; UMP biosynthesis via de novo pathway; (S)-dihydroorotate from bicarbonate: step 1/3. Small subunit of the glutamine-dependent carbamoyl phosphate synthetase (CPSase). CPSase catalyzes the formation of carbamoyl phosphate from the ammonia moiety of glutamine, carbonate, and phosphate donated by ATP, constituting the first step of 2 biosynthetic pathways, one leading to arginine and/or urea and the other to pyrimidine nucleotides. The small subunit (glutamine amidotransferase) binds and cleaves glutamine to supply the large subunit with the substrate ammonia. The chain is Carbamoyl phosphate synthase small chain from Thermus thermophilus (strain ATCC BAA-163 / DSM 7039 / HB27).